We begin with the raw amino-acid sequence, 423 residues long: Pleckstrin homology domain-containing family O member 1 (423 aa).

3 disordered regions span residues 1–21, 81–100, and 217–277; these read MEKN…SAQP, RKSK…AHSR, and LAAG…HSEK. Over residues 7-20 the composition is skewed to polar residues; that stretch reads AKRGQQDGNQQSAQ. Positions 20–131 constitute a PH domain; it reads QPEKVGWVRK…WINALNSAIT (112 aa). Over residues 83-92 the composition is skewed to basic residues; sequence SKSRSKKNHS. The span at 222–259 shows a compositional bias: basic and acidic residues; sequence RRSDSENVKLSEKGRSGTLPRHEVTSWDKPTQRKDSLD.

C-terminal fragments could be released during apoptosis via caspase-3-dependent cleavage.

The protein localises to the membrane. The protein resides in the nucleus. Its subcellular location is the cytoplasm. Plays a role in the regulation of the actin cytoskeleton through its interactions with actin capping protein (CP). The polypeptide is Pleckstrin homology domain-containing family O member 1 (PLEKHO1) (Gallus gallus (Chicken)).